A 150-amino-acid chain; its full sequence is MNKYEIVIMLDPAENIEKAQSLLKSTFKSGVEKFEKLEFTKLAYEINKSKVAQYVLAIVNSQGKEEINEFVRKANITKTFWRHMIINLTSEKGINKPAKPKKTFKKTFVARKFSRDDESKTHSTEEPRRANTKSTYKKSTSFSQDNKNKK.

Positions 92 to 150 (KGINKPAKPKKTFKKTFVARKFSRDDESKTHSTEEPRRANTKSTYKKSTSFSQDNKNKK) are disordered. The span at 98–109 (AKPKKTFKKTFV) shows a compositional bias: basic residues. Over residues 113–129 (FSRDDESKTHSTEEPRR) the composition is skewed to basic and acidic residues. Residues 132–141 (TKSTYKKSTS) are compositionally biased toward low complexity.

Belongs to the bacterial ribosomal protein bS6 family.

Functionally, binds together with bS18 to 16S ribosomal RNA. This chain is Small ribosomal subunit protein bS6, found in Mycoplasmopsis pulmonis (strain UAB CTIP) (Mycoplasma pulmonis).